A 422-amino-acid chain; its full sequence is Tryptophan synthase beta chain 1 (422 aa).

N6-(pyridoxal phosphate)lysine is present on Lys107.

Belongs to the TrpB family. Tetramer of two alpha and two beta chains. It depends on pyridoxal 5'-phosphate as a cofactor.

It catalyses the reaction (1S,2R)-1-C-(indol-3-yl)glycerol 3-phosphate + L-serine = D-glyceraldehyde 3-phosphate + L-tryptophan + H2O. It functions in the pathway amino-acid biosynthesis; L-tryptophan biosynthesis; L-tryptophan from chorismate: step 5/5. In terms of biological role, the beta subunit is responsible for the synthesis of L-tryptophan from indole and L-serine. This chain is Tryptophan synthase beta chain 1 (trpB1), found in Sulfurisphaera tokodaii (strain DSM 16993 / JCM 10545 / NBRC 100140 / 7) (Sulfolobus tokodaii).